The primary structure comprises 352 residues: Phosphoribosylformylglycinamidine cyclo-ligase (352 aa).

It belongs to the AIR synthase family.

Its subcellular location is the cytoplasm. The catalysed reaction is 2-formamido-N(1)-(5-O-phospho-beta-D-ribosyl)acetamidine + ATP = 5-amino-1-(5-phospho-beta-D-ribosyl)imidazole + ADP + phosphate + H(+). Its pathway is purine metabolism; IMP biosynthesis via de novo pathway; 5-amino-1-(5-phospho-D-ribosyl)imidazole from N(2)-formyl-N(1)-(5-phospho-D-ribosyl)glycinamide: step 2/2. The protein is Phosphoribosylformylglycinamidine cyclo-ligase of Azoarcus sp. (strain BH72).